The chain runs to 258 residues: Imidazole glycerol phosphate synthase subunit HisF (258 aa).

Residues aspartate 12 and aspartate 131 contribute to the active site.

Belongs to the HisA/HisF family. As to quaternary structure, heterodimer of HisH and HisF.

It is found in the cytoplasm. The enzyme catalyses 5-[(5-phospho-1-deoxy-D-ribulos-1-ylimino)methylamino]-1-(5-phospho-beta-D-ribosyl)imidazole-4-carboxamide + L-glutamine = D-erythro-1-(imidazol-4-yl)glycerol 3-phosphate + 5-amino-1-(5-phospho-beta-D-ribosyl)imidazole-4-carboxamide + L-glutamate + H(+). It functions in the pathway amino-acid biosynthesis; L-histidine biosynthesis; L-histidine from 5-phospho-alpha-D-ribose 1-diphosphate: step 5/9. Its function is as follows. IGPS catalyzes the conversion of PRFAR and glutamine to IGP, AICAR and glutamate. The HisF subunit catalyzes the cyclization activity that produces IGP and AICAR from PRFAR using the ammonia provided by the HisH subunit. The protein is Imidazole glycerol phosphate synthase subunit HisF of Corynebacterium glutamicum (strain R).